The chain runs to 143 residues: Ribulose bisphosphate carboxylase large chain (143 aa).

The propeptide occupies 1–2 (MS). Position 3 is an N-acetylproline (proline 3). Lysine 14 is modified (N6,N6,N6-trimethyllysine). A substrate-binding site is contributed by residue 123.

This sequence belongs to the RuBisCO large chain family. Type I subfamily. Heterohexadecamer of 8 large chains and 8 small chains.

The protein localises to the plastid. It localises to the chloroplast. The enzyme catalyses 2 (2R)-3-phosphoglycerate + 2 H(+) = D-ribulose 1,5-bisphosphate + CO2 + H2O. It carries out the reaction D-ribulose 1,5-bisphosphate + O2 = 2-phosphoglycolate + (2R)-3-phosphoglycerate + 2 H(+). Functionally, ruBisCO catalyzes two reactions: the carboxylation of D-ribulose 1,5-bisphosphate, the primary event in carbon dioxide fixation, as well as the oxidative fragmentation of the pentose substrate in the photorespiration process. Both reactions occur simultaneously and in competition at the same active site. In Nemopanthus mucronatus (Catberry), this protein is Ribulose bisphosphate carboxylase large chain (rbcL).